Reading from the N-terminus, the 239-residue chain is MAKLGVNIDHVATIRQARGGVEPDPVAAAAIAELAGADGITIHLREDRRHIQDRDLKLLRQTVKTRLNLEMAATDEMVNIAISVKPDMCTLVPEKRQELTTEGGLDVRLNLESIKEAVQRLQDGGLIVSLFIDPDPDQIKAADKTGADYIEIHTGAFAEARDWKSEQAELAKIENAIKLAGKLGMGINAGHGLNYANIRKVAALGGIEEYNIGHSIISKAVLVGLDRAVRDMVDLVKYA.

Asparagine 7 serves as a coordination point for 3-amino-2-oxopropyl phosphate. 1-deoxy-D-xylulose 5-phosphate is bound at residue 9–10 (DH). Arginine 18 is a binding site for 3-amino-2-oxopropyl phosphate. Histidine 43 serves as the catalytic Proton acceptor. 1-deoxy-D-xylulose 5-phosphate-binding residues include arginine 45 and histidine 50. Glutamate 70 serves as the catalytic Proton acceptor. 1-deoxy-D-xylulose 5-phosphate is bound at residue threonine 100. Residue histidine 191 is the Proton donor of the active site. 3-amino-2-oxopropyl phosphate is bound by residues glycine 192 and 213-214 (GH).

This sequence belongs to the PNP synthase family. As to quaternary structure, homooctamer; tetramer of dimers.

The protein resides in the cytoplasm. The catalysed reaction is 3-amino-2-oxopropyl phosphate + 1-deoxy-D-xylulose 5-phosphate = pyridoxine 5'-phosphate + phosphate + 2 H2O + H(+). The protein operates within cofactor biosynthesis; pyridoxine 5'-phosphate biosynthesis; pyridoxine 5'-phosphate from D-erythrose 4-phosphate: step 5/5. Its function is as follows. Catalyzes the complicated ring closure reaction between the two acyclic compounds 1-deoxy-D-xylulose-5-phosphate (DXP) and 3-amino-2-oxopropyl phosphate (1-amino-acetone-3-phosphate or AAP) to form pyridoxine 5'-phosphate (PNP) and inorganic phosphate. The sequence is that of Pyridoxine 5'-phosphate synthase from Geotalea uraniireducens (strain Rf4) (Geobacter uraniireducens).